A 358-amino-acid chain; its full sequence is Hydroxyproline O-arabinosyltransferase 2 (358 aa).

Residues 7–26 (YFFPILMTLSLFLIIRYNYI) form a helical; Signal-anchor membrane-spanning segment.

In terms of tissue distribution, ubiquitous.

It is found in the golgi apparatus. It localises to the cis-Golgi network membrane. It catalyses the reaction trans-4-hydroxy-L-prolyl-[protein] + UDP-beta-L-arabinofuranose = O-(beta-L-arabinofuranosyl)-trans-4-hydroxy-L-prolyl-[protein] + UDP + H(+). Its function is as follows. Glycosyltransferase involved in the O-arabinosylation of several proteins including extensins and small signaling peptides. Catalyzes the transfer of the initial L-arabinose to the hydroxyl group of Hyp residues. Contributes redundantly with HPAT1 and HPAT3 to arabinosylation of EXT3. The chain is Hydroxyproline O-arabinosyltransferase 2 from Arabidopsis thaliana (Mouse-ear cress).